A 224-amino-acid chain; its full sequence is Mammalian ependymin-related protein 1 (224 aa).

The signal sequence occupies residues methionine 1–glycine 37. 3 disulfides stabilise this stretch: cysteine 42–cysteine 172, cysteine 88–cysteine 222, and cysteine 113–cysteine 210. Residues asparagine 130 and asparagine 182 are each glycosylated (N-linked (GlcNAc...) asparagine).

The protein belongs to the ependymin family. In terms of assembly, homodimer. Post-translationally, N-glycosylated; the glycan contains mannose-6-phosphate moieties. In terms of tissue distribution, detected in brain (at protein level).

Its subcellular location is the lysosome lumen. The protein resides in the secreted. Its function is as follows. Binds anionic lipids and gangliosides at acidic pH. The sequence is that of Mammalian ependymin-related protein 1 (Epdr1) from Rattus norvegicus (Rat).